The primary structure comprises 61 residues: Small ribosomal subunit protein uS14 (61 aa).

4 residues coordinate Zn(2+): Cys-24, Cys-27, Cys-40, and Cys-43.

The protein belongs to the universal ribosomal protein uS14 family. Zinc-binding uS14 subfamily. In terms of assembly, part of the 30S ribosomal subunit. Contacts proteins S3 and S10. Zn(2+) serves as cofactor.

Its function is as follows. Binds 16S rRNA, required for the assembly of 30S particles and may also be responsible for determining the conformation of the 16S rRNA at the A site. The protein is Small ribosomal subunit protein uS14 of Caldanaerobacter subterraneus subsp. tengcongensis (strain DSM 15242 / JCM 11007 / NBRC 100824 / MB4) (Thermoanaerobacter tengcongensis).